A 290-amino-acid polypeptide reads, in one-letter code: Shikimate dehydrogenase (NADP(+)) (290 aa).

Shikimate is bound by residues 18–20 and threonine 66; that span reads SYS. Lysine 70 (proton acceptor) is an active-site residue. Glutamate 82 provides a ligand contact to NADP(+). Shikimate-binding residues include asparagine 91 and aspartate 106. NADP(+) is bound by residues 130-134 and methionine 229; that span reads GSGGA. Tyrosine 231 contributes to the shikimate binding site. Glycine 252 is an NADP(+) binding site.

Belongs to the shikimate dehydrogenase family. Homodimer.

It carries out the reaction shikimate + NADP(+) = 3-dehydroshikimate + NADPH + H(+). The protein operates within metabolic intermediate biosynthesis; chorismate biosynthesis; chorismate from D-erythrose 4-phosphate and phosphoenolpyruvate: step 4/7. Involved in the biosynthesis of the chorismate, which leads to the biosynthesis of aromatic amino acids. Catalyzes the reversible NADPH linked reduction of 3-dehydroshikimate (DHSA) to yield shikimate (SA). In Chlorobium phaeovibrioides (strain DSM 265 / 1930) (Prosthecochloris vibrioformis (strain DSM 265)), this protein is Shikimate dehydrogenase (NADP(+)).